We begin with the raw amino-acid sequence, 342 residues long: MSKEPPKNSREKTKNLLLKLQDNICKGLENIDGKAKFTEESWLREEGGGGKSRVLKNGSIFEQAGVNFSEVHGKELPQSIISQRPEAKGHKWFATGTSMVLHPKNPFIPTVHLNYRYFEAGPVWWFGGGADLTPYYPYLTDVRNFHKEHCNACEKVNKNLHKVFKPWCDEYFFLKHRNESRGIGGIFYDYQDGSGRIYKGNNKESKAYKESINIGELNLNWNNLFSLAENCGGAFLDSYQPIIEKRVNQNYTKEQREFQLYRRGRYVEFNLVWDRGTIFGLQTNGRTESILMSLPPLARWEYGYKAKKGSREDYLTKIFTKPQDWQNDKILEKFCKENNIFD.

Ser-98 contacts substrate. His-102 and His-112 together coordinate a divalent metal cation. His-112 (proton donor) is an active-site residue. 114–116 (NYR) contributes to the substrate binding site. Positions 146 and 176 each coordinate a divalent metal cation. Positions 266–301 (YVEFNLVWDRGTIFGLQTNGRTESILMSLPPLARWE) are important for dimerization.

It belongs to the aerobic coproporphyrinogen-III oxidase family. As to quaternary structure, homodimer. A divalent metal cation serves as cofactor.

Its subcellular location is the cytoplasm. It catalyses the reaction coproporphyrinogen III + O2 + 2 H(+) = protoporphyrinogen IX + 2 CO2 + 2 H2O. It participates in porphyrin-containing compound metabolism; protoporphyrin-IX biosynthesis; protoporphyrinogen-IX from coproporphyrinogen-III (O2 route): step 1/1. Functionally, involved in the heme and chlorophyll biosynthesis. Catalyzes the aerobic oxidative decarboxylation of propionate groups of rings A and B of coproporphyrinogen-III to yield the vinyl groups in protoporphyrinogen-IX. This chain is Oxygen-dependent coproporphyrinogen-III oxidase, found in Prochlorococcus marinus subsp. pastoris (strain CCMP1986 / NIES-2087 / MED4).